The primary structure comprises 95 residues: Aspartyl/glutamyl-tRNA(Asn/Gln) amidotransferase subunit C (95 aa).

This sequence belongs to the GatC family. In terms of assembly, heterotrimer of A, B and C subunits.

It carries out the reaction L-glutamyl-tRNA(Gln) + L-glutamine + ATP + H2O = L-glutaminyl-tRNA(Gln) + L-glutamate + ADP + phosphate + H(+). The enzyme catalyses L-aspartyl-tRNA(Asn) + L-glutamine + ATP + H2O = L-asparaginyl-tRNA(Asn) + L-glutamate + ADP + phosphate + 2 H(+). In terms of biological role, allows the formation of correctly charged Asn-tRNA(Asn) or Gln-tRNA(Gln) through the transamidation of misacylated Asp-tRNA(Asn) or Glu-tRNA(Gln) in organisms which lack either or both of asparaginyl-tRNA or glutaminyl-tRNA synthetases. The reaction takes place in the presence of glutamine and ATP through an activated phospho-Asp-tRNA(Asn) or phospho-Glu-tRNA(Gln). The polypeptide is Aspartyl/glutamyl-tRNA(Asn/Gln) amidotransferase subunit C (Gluconobacter oxydans (strain 621H) (Gluconobacter suboxydans)).